A 54-amino-acid polypeptide reads, in one-letter code: Small ribosomal subunit protein uS14 (54 aa).

Zn(2+)-binding residues include Cys-19, Cys-22, Cys-37, and Cys-40.

The protein belongs to the universal ribosomal protein uS14 family. Zinc-binding uS14 subfamily. In terms of assembly, part of the 30S ribosomal subunit. Zn(2+) serves as cofactor.

Binds 16S rRNA, required for the assembly of 30S particles. The chain is Small ribosomal subunit protein uS14 from Pyrobaculum aerophilum (strain ATCC 51768 / DSM 7523 / JCM 9630 / CIP 104966 / NBRC 100827 / IM2).